A 144-amino-acid polypeptide reads, in one-letter code: Transcriptional regulator SlyA (144 aa).

The region spanning 2–135 is the HTH marR-type domain; the sequence is ESPLGSDLSR…LSQMISKLEK (134 aa). Residues 49–72 constitute a DNA-binding region (H-T-H motif); it reads QIQLAKAIGIEQPSLVRTLDQLEE.

It belongs to the SlyA family. In terms of assembly, homodimer.

Its function is as follows. Transcription regulator that can specifically activate or repress expression of target genes. This is Transcriptional regulator SlyA from Wigglesworthia glossinidia brevipalpis.